Here is a 350-residue protein sequence, read N- to C-terminus: Vetispiradiene synthase 3 (350 aa).

D103, D107, D246, T250, and E254 together coordinate Mg(2+). A DDXXD motif motif is present at residues 103-107; it reads DDTFD.

Belongs to the terpene synthase family. Tpsa subfamily. The cofactor is Mg(2+).

It localises to the cytoplasm. It catalyses the reaction (2E,6E)-farnesyl diphosphate = (-)-vetispiradiene + diphosphate. Its pathway is secondary metabolite biosynthesis; terpenoid biosynthesis. Sesquiterpene synthase that catalyzes the formation of vetispiradiene from trans,trans-farnesyl diphosphate. The initial internal cyclization produces the monocyclic intermediate germacrene A. This is Vetispiradiene synthase 3 from Hyoscyamus muticus (Egyptian henbane).